We begin with the raw amino-acid sequence, 124 residues long: Fluoride-specific ion channel FluC (124 aa).

4 helical membrane passes run phenylalanine 4–valine 24, tyrosine 35–leucine 55, leucine 67–glycine 87, and alanine 100–leucine 120. Na(+)-binding residues include glycine 75 and threonine 78.

The protein belongs to the fluoride channel Fluc/FEX (TC 1.A.43) family.

It is found in the cell inner membrane. The catalysed reaction is fluoride(in) = fluoride(out). Its activity is regulated as follows. Na(+) is not transported, but it plays an essential structural role and its presence is essential for fluoride channel function. Functionally, fluoride-specific ion channel. Important for reducing fluoride concentration in the cell, thus reducing its toxicity. This chain is Fluoride-specific ion channel FluC, found in Nitratidesulfovibrio vulgaris (strain ATCC 29579 / DSM 644 / CCUG 34227 / NCIMB 8303 / VKM B-1760 / Hildenborough) (Desulfovibrio vulgaris).